Here is a 223-residue protein sequence, read N- to C-terminus: Chalcone--flavanone isomerase (223 aa).

Substrate-binding residues include Thr50, Asn114, and Thr191.

Belongs to the chalcone isomerase family.

The catalysed reaction is a chalcone = a flavanone.. It functions in the pathway secondary metabolite biosynthesis; flavonoid biosynthesis. Catalyzes the intramolecular cyclization of bicyclic chalcones into tricyclic (S)-flavanones. Responsible for the isomerization of 4,2',4',6'-tetrahydroxychalcone (also termed chalcone) into naringenin. This is Chalcone--flavanone isomerase (CHI) from Pisum sativum (Garden pea).